We begin with the raw amino-acid sequence, 164 residues long: SsrA-binding protein (164 aa).

Belongs to the SmpB family.

It is found in the cytoplasm. In terms of biological role, required for rescue of stalled ribosomes mediated by trans-translation. Binds to transfer-messenger RNA (tmRNA), required for stable association of tmRNA with ribosomes. tmRNA and SmpB together mimic tRNA shape, replacing the anticodon stem-loop with SmpB. tmRNA is encoded by the ssrA gene; the 2 termini fold to resemble tRNA(Ala) and it encodes a 'tag peptide', a short internal open reading frame. During trans-translation Ala-aminoacylated tmRNA acts like a tRNA, entering the A-site of stalled ribosomes, displacing the stalled mRNA. The ribosome then switches to translate the ORF on the tmRNA; the nascent peptide is terminated with the 'tag peptide' encoded by the tmRNA and targeted for degradation. The ribosome is freed to recommence translation, which seems to be the essential function of trans-translation. The sequence is that of SsrA-binding protein from Shewanella sediminis (strain HAW-EB3).